A 128-amino-acid polypeptide reads, in one-letter code: Large ribosomal subunit protein bL17 (128 aa).

The protein belongs to the bacterial ribosomal protein bL17 family. Part of the 50S ribosomal subunit. Contacts protein L32.

The chain is Large ribosomal subunit protein bL17 from Streptococcus pyogenes serotype M49 (strain NZ131).